A 655-amino-acid chain; its full sequence is p-hydroxybenzoic acid efflux pump subunit AaeB (655 aa).

Residues 1–12 (MGIFSIANQHIR) are Periplasmic-facing. Residues 13 to 33 (FAVKLACAIVLALFIGFHFQL) form a helical membrane-spanning segment. Topologically, residues 34–37 (ETPR) are cytoplasmic. The helical transmembrane segment at 38–58 (WAVLTAAIVAAGPAFAAGGEP) threads the bilayer. Over 59-68 (YSGAIRYRGM) the chain is Periplasmic. Residues 69 to 89 (LRIIGTFIGCIAALIIIISMI) traverse the membrane as a helical segment. The Cytoplasmic segment spans residues 90-92 (RAP). A helical transmembrane segment spans residues 93-113 (LLMILVCCVWVGFCTWISSLV). Residues 114–120 (RIENSYA) lie on the Periplasmic side of the membrane. Residues 121–141 (WGLSGYTALIIVITIQTEPLL) form a helical membrane-spanning segment. Residues 142-151 (TPQFALERCS) are Cytoplasmic-facing. The chain crosses the membrane as a helical span at residues 152–172 (EIVIGIGCAILADLLFSPRSI). Over 173–369 (KQEVDRELDS…RTTLSCILGT (197 aa)) the chain is Periplasmic. A helical transmembrane segment spans residues 370–390 (LFWLWTGWTSGNGEMVMIAVV). The Cytoplasmic portion of the chain corresponds to 391 to 406 (TSLAMRLPNPRMVCID). The chain crosses the membrane as a helical span at residues 407–427 (FIYGTLAALPLGLLYFLVIIP). Residues 428–430 (NTQ) lie on the Periplasmic side of the membrane. A helical transmembrane segment spans residues 431 to 451 (QSMLLLCLSLAVLGFFIGIEV). Residues 452-458 (QKRRLGS) are Cytoplasmic-facing. The chain crosses the membrane as a helical span at residues 459-479 (MGALASTINIIVLDNPMTFHF). Residues 480-481 (SQ) lie on the Periplasmic side of the membrane. A helical transmembrane segment spans residues 482-502 (FLDSALGQIVGCMLAFIVILL). Topologically, residues 503 to 655 (VRDKSKDRTG…HKYQNALTDS (153 aa)) are cytoplasmic.

It belongs to the aromatic acid exporter ArAE (TC 2.A.85) family.

It localises to the cell inner membrane. In terms of biological role, forms an efflux pump with AaeA. Could function as a metabolic relief valve, allowing to eliminate certain compounds when they accumulate to high levels in the cell. This Salmonella paratyphi A (strain ATCC 9150 / SARB42) protein is p-hydroxybenzoic acid efflux pump subunit AaeB.